The following is a 336-amino-acid chain: Holliday junction branch migration complex subunit RuvB (336 aa).

Positions 4–184 (ADRIISAIAK…FGIVQRLEFY (181 aa)) are large ATPase domain (RuvB-L). ATP-binding positions include I23, R24, G65, K68, T69, T70, 131-133 (EDY), R174, Y184, and R221. T69 lines the Mg(2+) pocket. The segment at 185-255 (SIEDLTSIVM…IAKAALAMLD (71 aa)) is small ATPAse domain (RuvB-S). Positions 258-336 (QAGFDYLDRK…HFGLAKLADK (79 aa)) are head domain (RuvB-H). Positions 294, 313, and 318 each coordinate DNA.

Belongs to the RuvB family. In terms of assembly, homohexamer. Forms an RuvA(8)-RuvB(12)-Holliday junction (HJ) complex. HJ DNA is sandwiched between 2 RuvA tetramers; dsDNA enters through RuvA and exits via RuvB. An RuvB hexamer assembles on each DNA strand where it exits the tetramer. Each RuvB hexamer is contacted by two RuvA subunits (via domain III) on 2 adjacent RuvB subunits; this complex drives branch migration. In the full resolvosome a probable DNA-RuvA(4)-RuvB(12)-RuvC(2) complex forms which resolves the HJ.

It is found in the cytoplasm. It catalyses the reaction ATP + H2O = ADP + phosphate + H(+). Functionally, the RuvA-RuvB-RuvC complex processes Holliday junction (HJ) DNA during genetic recombination and DNA repair, while the RuvA-RuvB complex plays an important role in the rescue of blocked DNA replication forks via replication fork reversal (RFR). RuvA specifically binds to HJ cruciform DNA, conferring on it an open structure. The RuvB hexamer acts as an ATP-dependent pump, pulling dsDNA into and through the RuvAB complex. RuvB forms 2 homohexamers on either side of HJ DNA bound by 1 or 2 RuvA tetramers; 4 subunits per hexamer contact DNA at a time. Coordinated motions by a converter formed by DNA-disengaged RuvB subunits stimulates ATP hydrolysis and nucleotide exchange. Immobilization of the converter enables RuvB to convert the ATP-contained energy into a lever motion, pulling 2 nucleotides of DNA out of the RuvA tetramer per ATP hydrolyzed, thus driving DNA branch migration. The RuvB motors rotate together with the DNA substrate, which together with the progressing nucleotide cycle form the mechanistic basis for DNA recombination by continuous HJ branch migration. Branch migration allows RuvC to scan DNA until it finds its consensus sequence, where it cleaves and resolves cruciform DNA. The sequence is that of Holliday junction branch migration complex subunit RuvB from Actinobacillus succinogenes (strain ATCC 55618 / DSM 22257 / CCUG 43843 / 130Z).